The following is a 491-amino-acid chain: Glutamyl-tRNA(Gln) amidotransferase subunit A (491 aa).

Catalysis depends on charge relay system residues K78 and S158. The active-site Acyl-ester intermediate is S182.

Belongs to the amidase family. GatA subfamily. Heterotrimer of A, B and C subunits.

It catalyses the reaction L-glutamyl-tRNA(Gln) + L-glutamine + ATP + H2O = L-glutaminyl-tRNA(Gln) + L-glutamate + ADP + phosphate + H(+). Its function is as follows. Allows the formation of correctly charged Gln-tRNA(Gln) through the transamidation of misacylated Glu-tRNA(Gln) in organisms which lack glutaminyl-tRNA synthetase. The reaction takes place in the presence of glutamine and ATP through an activated gamma-phospho-Glu-tRNA(Gln). This chain is Glutamyl-tRNA(Gln) amidotransferase subunit A, found in Bradyrhizobium sp. (strain ORS 278).